Consider the following 204-residue polypeptide: Factor arrest protein 3 (204 aa).

In terms of assembly, component of a complex at least composed of FAR3, FAR7, FAR8, FAR10, FAR11 and VPS64.

The protein resides in the endoplasmic reticulum. Its function is as follows. Participates in the control of the reentry into the cell cycle following pheromone treatment. The polypeptide is Factor arrest protein 3 (FAR3) (Saccharomyces cerevisiae (strain ATCC 204508 / S288c) (Baker's yeast)).